The sequence spans 215 residues: Cytochrome b6 (215 aa).

A helical membrane pass occupies residues 32–52 (IFYCLGGITFTLFLVQVATGF). C35 lines the heme c pocket. Residues H86 and H100 each coordinate heme b. A run of 3 helical transmembrane segments spans residues 90-110 (ASMM…TGGF), 116-136 (LTWI…VTGY), and 186-206 (LHTF…FLMI). H187 and H202 together coordinate heme b.

This sequence belongs to the cytochrome b family. PetB subfamily. As to quaternary structure, the 4 large subunits of the cytochrome b6-f complex are cytochrome b6, subunit IV (17 kDa polypeptide, PetD), cytochrome f and the Rieske protein, while the 4 small subunits are PetG, PetL, PetM and PetN. The complex functions as a dimer. Requires heme b as cofactor. Heme c is required as a cofactor.

It is found in the plastid. It localises to the chloroplast thylakoid membrane. Functionally, component of the cytochrome b6-f complex, which mediates electron transfer between photosystem II (PSII) and photosystem I (PSI), cyclic electron flow around PSI, and state transitions. In Tupiella akineta (Green alga), this protein is Cytochrome b6.